The following is a 271-amino-acid chain: MNAIVIAMMANLYAEPDLHAELVDEILYGMPVQIIEELENDWLYVRTAYRYEGYCQRNDVLFDDAITNTWIQKAQHVIGQRFADVLQEPKIQSTKIITLVKGSILYNVDSDTTSNTPWTAVQLATGEIGYLRSQWLHPKIAEHTFEEHAFRENVVQTALSYIATPYRWGGKSPLGIDCSGLCSMAYLLNGVIIFRDARIVEGFPIKEITIDRMQKGDLLFFPGHVALYLGQTLYVHASLGGNEVNVNSLDEQHPLYRQDLATTITAIGSLF.

SH3b domains lie at Met-1–Asp-64 and Gln-72–Ile-140. Residues His-148–Gly-268 form the NlpC/P60 domain. The Nucleophile role is filled by Cys-178. The active-site Proton acceptor is the His-224. The active site involves His-236.

The protein belongs to the peptidase C40 family.

The protein resides in the cytoplasm. Involved in cell sporulation. Hydrolyzes gamma-D-Glu-L-(meso)A2pm linkages only in those peptide units that have a free N-terminal L-alanine. The protein is Dipeptidyl-peptidase 6 of Lysinibacillus sphaericus (Bacillus sphaericus).